The primary structure comprises 324 residues: tRNA U34 carboxymethyltransferase (324 aa).

Carboxy-S-adenosyl-L-methionine-binding positions include Lys-91, Trp-105, Lys-110, Gly-130, 152-154 (DPS), 181-182 (IE), Met-196, Tyr-200, and Arg-315.

The protein belongs to the class I-like SAM-binding methyltransferase superfamily. CmoB family. Homotetramer.

The enzyme catalyses carboxy-S-adenosyl-L-methionine + 5-hydroxyuridine(34) in tRNA = 5-carboxymethoxyuridine(34) in tRNA + S-adenosyl-L-homocysteine + H(+). Functionally, catalyzes carboxymethyl transfer from carboxy-S-adenosyl-L-methionine (Cx-SAM) to 5-hydroxyuridine (ho5U) to form 5-carboxymethoxyuridine (cmo5U) at position 34 in tRNAs. This chain is tRNA U34 carboxymethyltransferase, found in Aliivibrio fischeri (strain ATCC 700601 / ES114) (Vibrio fischeri).